Consider the following 219-residue polypeptide: Adenylate kinase (219 aa).

10-15 is a binding site for ATP; that stretch reads GAGKGT. The interval 30–59 is NMP; that stretch reads STGDMLRVAVKVGTPLGIEAKKIMDSGGLV. AMP is bound by residues threonine 31, arginine 36, 57 to 59, 85 to 88, and glutamine 92; these read GLV and GFPR. Positions 122-159 are LID; it reads GRRTHLKSGRTYHITYNQPKVEGIDDITGEKLVQRSDD. ATP contacts are provided by residues arginine 123 and 132 to 133; that span reads TY. AMP contacts are provided by arginine 156 and arginine 167. Glycine 202 serves as a coordination point for ATP.

This sequence belongs to the adenylate kinase family. As to quaternary structure, monomer.

It is found in the cytoplasm. The enzyme catalyses AMP + ATP = 2 ADP. It functions in the pathway purine metabolism; AMP biosynthesis via salvage pathway; AMP from ADP: step 1/1. In terms of biological role, catalyzes the reversible transfer of the terminal phosphate group between ATP and AMP. Plays an important role in cellular energy homeostasis and in adenine nucleotide metabolism. This chain is Adenylate kinase, found in Vesicomyosocius okutanii subsp. Calyptogena okutanii (strain HA).